The sequence spans 409 residues: MIALPDTDSEDELPPGWEERATDDGTVCYVNQQGKTSQWTHPRTGRSKRITGELPLGWEKYYDEQGKRFMFLNKETQQRTNVDPRLAFAVEEPTQNVAQVRQRFDSCSTALQVLHGKDLHGRTALITGANCGIGYETARSLAHHGCEIIFACRNRSSAEAAIERIAQERPAARSRCRFAALDLSSLRSVQRFVEEIKQSVSHIDYLILNAGVFALPYTRTVDGLETTFQVSHLSHFYLTLQLETLFDYKTRIIVLSSESHRFANLPVENLAVHHLSPPPEKYWSMMAYNNAKLCNVLFAQELAQRWKQRGISVFSLHPGNMVSSDLSRNYWFYRLLFAIVRPFTKSLQQAAATSIYCATANELTGLSGLYFNNCFFCEPSKLSKSAALQQQLWKLSENLIAELVEQEQH.

The tract at residues 1–23 is disordered; the sequence is MIALPDTDSEDELPPGWEERATD. WW domains follow at residues 11–44 and 52–86; these read DELP…HPRT and GELP…DPRL. 128-134 contributes to the NADP(+) binding site; sequence GANCGIG. S257 is a binding site for substrate. Y288 serves as the catalytic Proton acceptor.

The protein belongs to the short-chain dehydrogenases/reductases (SDR) family.

The protein localises to the cytoplasm. The protein resides in the mitochondrion. It is found in the golgi apparatus. Its subcellular location is the lysosome. Putative oxidoreductase. May control genotoxic stress-induced cell death. May play a role in TGFB1 signaling and TGFB1-mediated cell death. May also play a role in tumor necrosis factor (TNF)-mediated cell death. May play a role in Wnt signaling. The sequence is that of WW domain-containing oxidoreductase (Wwox) from Drosophila melanogaster (Fruit fly).